We begin with the raw amino-acid sequence, 190 residues long: Segregation and condensation protein B (190 aa).

It belongs to the ScpB family. As to quaternary structure, homodimer. Homodimerization may be required to stabilize the binding of ScpA to the Smc head domains. Component of a cohesin-like complex composed of ScpA, ScpB and the Smc homodimer, in which ScpA and ScpB bind to the head domain of Smc. The presence of the three proteins is required for the association of the complex with DNA.

The protein resides in the cytoplasm. In terms of biological role, participates in chromosomal partition during cell division. May act via the formation of a condensin-like complex containing Smc and ScpA that pull DNA away from mid-cell into both cell halves. The protein is Segregation and condensation protein B of Bacillus thuringiensis subsp. konkukian (strain 97-27).